The following is a 276-amino-acid chain: Outer membrane lipoprotein 2 (276 aa).

A signal peptide spans 1-19 (MNFKKLLGVALVSALALTA). Cys20 carries N-palmitoyl cysteine lipidation. Cys20 is lipidated: S-diacylglycerol cysteine.

The protein belongs to the NlpA lipoprotein family.

The protein resides in the cell outer membrane. This Mannheimia haemolytica (Pasteurella haemolytica) protein is Outer membrane lipoprotein 2 (plpB).